Consider the following 546-residue polypeptide: Probable lysosomal cobalamin transporter (546 aa).

Helical transmembrane passes span 8–28 (LAQGWIPFTVVVVLAILFSWF), 48–68 (IIALFIALMTTALVPVDIFLV), 102–122 (ILYALLAFFVFVIIPFMYFFF), and 141–161 (YSIGFLIVASVLLLVGAFAPL). A glycan (N-linked (GlcNAc...) asparagine) is linked at asparagine 167. 4 helical membrane-spanning segments follow: residues 189–209 (TALSLLIGFLTLIGMLIMITY), 304–324 (MVFGAFFLLVALLIFVSLFIT), 352–372 (IIMVYAQIVFPLDYCLFLLVV), and 407–427 (ALLFMCVMLMLIVLSLNVMLF). N-linked (GlcNAc...) asparagine glycosylation is found at asparagine 444, asparagine 452, and asparagine 459. A helical membrane pass occupies residues 495 to 515 (VWFFGACYYWGTWLFLVVFMT).

The protein belongs to the LIMR family. LMBRD1 subfamily.

Its subcellular location is the lysosome membrane. Probable lysosomal cobalamin transporter. Required to export cobalamin from lysosomes allowing its conversion to cofactors. This Nematostella vectensis (Starlet sea anemone) protein is Probable lysosomal cobalamin transporter.